Reading from the N-terminus, the 184-residue chain is Rhox homeobox family member 1 (184 aa).

The tract at residues 26 to 104 (QLGAASSAEG…GPQPENMQPR (79 aa)) is disordered. Residues 88-99 (PAQAAMEGPQPE) are compositionally biased toward low complexity. Residues 103–162 (PRTRRTKFTLLQVEELESVFRHTQYPDVPTRRELAENLGVTEDKVRVWFKNKRARCRRHQ) constitute a DNA-binding region (homeobox). The Nuclear localization signal signature appears at 155-164 (RARCRRHQRE).

The protein belongs to the paired-like homeobox family. PEPP subfamily. As to quaternary structure, does not interact with itself. Ovary, testis and epididymis. Also detected in the prostate and the mammary gland. Expressed in many tumor cell lines derived from acute lymphocytic leukemia, prostate, endometrial adenocarcinoma, melanoma, bladder carcinoma, colon carcinoma, erythroleukemia and breast carcinoma. Not expressed in placenta. In testis, mainly expressed in germ cells, but also detected in somatic cells such as Sertoli cells, Leydig cells and peritubular cells.

Its subcellular location is the nucleus. In terms of biological role, transcription factor maybe involved in reproductive processes. Modulates expression of target genes encoding proteins involved in processes relevant to spermatogenesis. The sequence is that of Rhox homeobox family member 1 from Homo sapiens (Human).